A 240-amino-acid polypeptide reads, in one-letter code: Small ribosomal subunit protein uS3 (240 aa).

The 69-residue stretch at 39–107 (IREFIKEECK…ELHLNIVEVR (69 aa)) folds into the KH type-2 domain. Positions 212 to 222 (PQARDRRHAEL) are enriched in basic and acidic residues. A disordered region spans residues 212 to 240 (PQARDRRHAELQEGGGPRPQGGGRPRRDR). Over residues 224–234 (EGGGPRPQGGG) the composition is skewed to gly residues.

It belongs to the universal ribosomal protein uS3 family. In terms of assembly, part of the 30S ribosomal subunit. Forms a tight complex with proteins S10 and S14.

Functionally, binds the lower part of the 30S subunit head. Binds mRNA in the 70S ribosome, positioning it for translation. The sequence is that of Small ribosomal subunit protein uS3 from Dinoroseobacter shibae (strain DSM 16493 / NCIMB 14021 / DFL 12).